We begin with the raw amino-acid sequence, 1154 residues long: Spike glycoprotein (1154 aa).

An N-terminal signal peptide occupies residues 1-18 (MLERSLLLATLLSALCSA). Over 19 to 1096 (NLFGNNSYVY…LKTYIKWPWY (1078 aa)) the chain is Extracellular. N-linked (GlcNAc...) asparagine; by host glycans are attached at residues N23, N74, N102, N139, N145, N164, N179, N213, N238, N248, N265, N272, N277, N307, N426, N448, N514, N531, N543, N580, N592, N670, and N677. The interval 770 to 875 (IPFATQLQAR…QVDRIITGRL (106 aa)) is heptad repeat 1 (HR1). Positions 823–867 (QDVVNKQSSILTETMASLNKNFGAISSVLQDIYQQLDSIQADAQV) form a coiled coil. N-linked (GlcNAc...) asparagine; by host glycans are attached at residues N948, N961, N980, N1015, N1039, N1052, and N1075. The heptad repeat 2 (HR2) stretch occupies residues 1025 to 1106 (NDDFDFDDEL…VWLAIAFATI (82 aa)). Residues 1056-1084 (PILDIGSEIDRIQGVIQGLNDSLIDLETL) are a coiled coil. A helical membrane pass occupies residues 1097 to 1117 (VWLAIAFATIIFILILGWLFF). Over 1118-1154 (MTGCCGCCCGCFGIIPLMSKCGKKSSYYTTFDNDVVT) the chain is Cytoplasmic.

This sequence belongs to the gammacoronaviruses spike protein family. Homotrimer; each monomer consists of a S1 and a S2 subunit. The resulting peplomers protrude from the virus surface as spikes. Specific enzymatic cleavages in vivo yield mature proteins. The precursor is processed into S1 and S2 by host cell furin or furin-like protease to yield the mature S1 and S2 proteins. The cleavage site between S1 and S2 requires the optimal sequence [KR]-X-[KR]-R. Additionally, a second cleavage leads to the release of a fusion peptide after viral attachment to host cell receptor.

It localises to the virion membrane. Its subcellular location is the host endoplasmic reticulum-Golgi intermediate compartment membrane. In terms of biological role, attaches the virion to the host cell membrane by interacting with sialic acids, initiating the infection. Functionally, mediates fusion of the virion and cellular membranes by acting as a class I viral fusion protein. Under the current model, the protein has at least 3 conformational states: pre-fusion native state, pre-hairpin intermediate state, and post-fusion hairpin state. During viral and target cell membrane fusion, the coiled coil regions (heptad repeats) assume a trimer-of-hairpins structure, positioning the fusion peptide in close proximity to the C-terminal region of the ectodomain. The formation of this structure appears to drive apposition and subsequent fusion of viral and target cell membranes. Its function is as follows. Acts as a viral fusion peptide after S2 cleavage occurring upon virus endocytosis. The protein is Spike glycoprotein of Gallus gallus (Chicken).